A 480-amino-acid polypeptide reads, in one-letter code: ATP-dependent rRNA helicase RRP3 (480 aa).

Basic and acidic residues-rich tracts occupy residues 1–17 (MAKATEKRVKRAKKEES) and 33–46 (DTTKSDNEEEEPKK). Residues 1–63 (MAKATEKRVK…VEVDESEEQT (63 aa)) form a disordered region. The Q motif signature appears at 64-92 (KTFKDLGVIDSICETCEELKFTKPTPIQA). Positions 95–266 (IPYALEGRDI…RASLVDPVRV (172 aa)) constitute a Helicase ATP-binding domain. An ATP-binding site is contributed by 108–115 (AQTGSGKT). The DEAD box motif lies at 214–217 (DEAD). The Helicase C-terminal domain occupies 277-437 (NLLQYMVFCP…SYPLESEAVM (161 aa)). Residues 450–480 (AIQEMKGEDGTKKRSKFDKKRRRDEMDIGEQ) form a disordered region. Residues 462–471 (KRSKFDKKRR) are compositionally biased toward basic residues.

Belongs to the DEAD box helicase family. DDX47/RRP3 subfamily. In terms of assembly, interacts with the SSU processome.

It is found in the nucleus. The catalysed reaction is ATP + H2O = ADP + phosphate + H(+). Functionally, ATP-dependent rRNA helicase required for pre-ribosomal RNA processing. Involved in the maturation of the 35S-pre-rRNA and to its cleavage to mature 18S rRNA. This chain is ATP-dependent rRNA helicase RRP3, found in Yarrowia lipolytica (strain CLIB 122 / E 150) (Yeast).